The sequence spans 72 residues: Translation initiation factor IF-1 (72 aa).

Residues 1–72 (MAKEDCIEME…TKGRIKFRSK (72 aa)) form the S1-like domain.

The protein belongs to the IF-1 family. As to quaternary structure, component of the 30S ribosomal translation pre-initiation complex which assembles on the 30S ribosome in the order IF-2 and IF-3, IF-1 and N-formylmethionyl-tRNA(fMet); mRNA recruitment can occur at any time during PIC assembly.

The protein localises to the cytoplasm. Its function is as follows. One of the essential components for the initiation of protein synthesis. Stabilizes the binding of IF-2 and IF-3 on the 30S subunit to which N-formylmethionyl-tRNA(fMet) subsequently binds. Helps modulate mRNA selection, yielding the 30S pre-initiation complex (PIC). Upon addition of the 50S ribosomal subunit IF-1, IF-2 and IF-3 are released leaving the mature 70S translation initiation complex. The chain is Translation initiation factor IF-1 from Francisella tularensis subsp. tularensis (strain WY96-3418).